Consider the following 126-residue polypeptide: Protein LLP homolog (126 aa).

A compositionally biased stretch (basic residues) spans 1 to 21 (MAKSLRSKWRRKMRAEKRKKV). Disordered stretches follow at residues 1 to 22 (MAKSLRSKWRRKMRAEKRKKVA) and 53 to 126 (VPPE…RLAW). Positions 73–94 (DGGKMDLDTKRNKKTMLDEHGR) are enriched in basic and acidic residues. Residues 103–126 (QAKKLKAKRVGKNGKPKPKKRLAW) show a composition bias toward basic residues.

It belongs to the learning-associated protein family.

It is found in the nucleus. It localises to the nucleolus. Its subcellular location is the chromosome. Its function is as follows. Regulates dendritic and spine growth and synaptic transmission. The protein is Protein LLP homolog (llph) of Danio rerio (Zebrafish).